A 268-amino-acid chain; its full sequence is Sterol uptake protein 2 (268 aa).

Belongs to the SUT1 family.

Its subcellular location is the nucleus. Putative transcription factor involved in the regulation of the activity of the cAMP/protein kinase A pathway. Involved in sterol uptake. With SUT1, positively regulates mating by repressing the expression of the mating inhibitors NCE102, PRR2 and RHO5 in response to pheromone. In Saccharomyces cerevisiae (strain ATCC 204508 / S288c) (Baker's yeast), this protein is Sterol uptake protein 2.